The following is a 35-amino-acid chain: UPF0387 membrane protein YohO (35 aa).

The chain crosses the membrane as a helical span at residues 6 to 26 (IGVIALFLFMALGGIGGVMLA).

Belongs to the UPF0387 family.

It is found in the cell inner membrane. In Shigella boydii serotype 4 (strain Sb227), this protein is UPF0387 membrane protein YohO.